The primary structure comprises 158 residues: SsrA-binding protein (158 aa).

The protein belongs to the SmpB family.

It is found in the cytoplasm. In terms of biological role, required for rescue of stalled ribosomes mediated by trans-translation. Binds to transfer-messenger RNA (tmRNA), required for stable association of tmRNA with ribosomes. tmRNA and SmpB together mimic tRNA shape, replacing the anticodon stem-loop with SmpB. tmRNA is encoded by the ssrA gene; the 2 termini fold to resemble tRNA(Ala) and it encodes a 'tag peptide', a short internal open reading frame. During trans-translation Ala-aminoacylated tmRNA acts like a tRNA, entering the A-site of stalled ribosomes, displacing the stalled mRNA. The ribosome then switches to translate the ORF on the tmRNA; the nascent peptide is terminated with the 'tag peptide' encoded by the tmRNA and targeted for degradation. The ribosome is freed to recommence translation, which seems to be the essential function of trans-translation. The protein is SsrA-binding protein of Chloroflexus aggregans (strain MD-66 / DSM 9485).